A 249-amino-acid polypeptide reads, in one-letter code: ATP synthase subunit a, chloroplastic (249 aa).

5 helical membrane-spanning segments follow: residues 40 to 60 (QVLITSWVVIAILLGSAVIAI), 97 to 117 (VPFIGTLFLFIFVSNWSGALL), 136 to 156 (INTTVALALLTSVAYFYAGLS), 201 to 221 (LVVVVLVSLVPLVVPIPVMFL), and 222 to 242 (GLFTSGIQALIFATLAAAYIG).

The protein belongs to the ATPase A chain family. In terms of assembly, F-type ATPases have 2 components, CF(1) - the catalytic core - and CF(0) - the membrane proton channel. CF(1) has five subunits: alpha(3), beta(3), gamma(1), delta(1), epsilon(1). CF(0) has four main subunits: a, b, b' and c.

The protein localises to the plastid. It is found in the chloroplast thylakoid membrane. Functionally, key component of the proton channel; it plays a direct role in the translocation of protons across the membrane. The sequence is that of ATP synthase subunit a, chloroplastic from Barbarea verna (Land cress).